We begin with the raw amino-acid sequence, 239 residues long: Tumor necrosis factor ligand superfamily member 14 (239 aa).

Residues 1–37 (MESVVQPSVFVVDGQTDIPFRRLEQNHRRRRCGTVQV) lie on the Cytoplasmic side of the membrane. The helical; Signal-anchor for type II membrane protein transmembrane segment at 38–58 (SLALVLLLGAGLATQGWFLLR) threads the bilayer. Topologically, residues 59-239 (LHQRLGDIVA…TRSYFGAFMV (181 aa)) are extracellular. In terms of domain architecture, THD spans 92-239 (PAAHLTGANA…TRSYFGAFMV (148 aa)). N100 carries an N-linked (GlcNAc...) asparagine glycan. Residues C152 and C187 are joined by a disulfide bond. An N-linked (GlcNAc...) asparagine glycan is attached at N191.

The protein belongs to the tumor necrosis factor family. As to quaternary structure, homotrimer. Interacts with TNFRSF14. Post-translationally, the soluble form derives from the membrane form by proteolytic processing.

It is found in the cell membrane. Its subcellular location is the secreted. In terms of biological role, cytokine that binds to TNFRSF3/LTBR. Binding to the decoy receptor TNFRSF6B modulates its effects. Activates NFKB and stimulates the proliferation of T-cells. Acts as a ligand for TNFRSF14/HVEM. Upon binding to TNFRSF14/HVEM, delivers costimulatory signals to T cells, leading to T cell proliferation and IFNG production. This chain is Tumor necrosis factor ligand superfamily member 14 (Tnfsf14), found in Mus musculus (Mouse).